The chain runs to 334 residues: 6-phosphogluconolactonase (334 aa).

The protein belongs to the cycloisomerase 2 family.

It carries out the reaction 6-phospho-D-glucono-1,5-lactone + H2O = 6-phospho-D-gluconate + H(+). The protein operates within carbohydrate degradation; pentose phosphate pathway; D-ribulose 5-phosphate from D-glucose 6-phosphate (oxidative stage): step 2/3. In terms of biological role, catalyzes the hydrolysis of 6-phosphogluconolactone to 6-phosphogluconate. The polypeptide is 6-phosphogluconolactonase (Buchnera aphidicola subsp. Acyrthosiphon pisum (strain APS) (Acyrthosiphon pisum symbiotic bacterium)).